The sequence spans 509 residues: 2,3-bisphosphoglycerate-independent phosphoglycerate mutase (509 aa).

Mn(2+)-binding residues include Asp-14 and Ser-64. Ser-64 serves as the catalytic Phosphoserine intermediate. Residues His-125, 155–156, Arg-187, Arg-193, 259–262, and Lys-332 each bind substrate; these read RD and RADR. The Mn(2+) site is built by Asp-399, His-403, Asp-440, His-441, and His-459.

This sequence belongs to the BPG-independent phosphoglycerate mutase family. Monomer. Mn(2+) is required as a cofactor.

It catalyses the reaction (2R)-2-phosphoglycerate = (2R)-3-phosphoglycerate. Its pathway is carbohydrate degradation; glycolysis; pyruvate from D-glyceraldehyde 3-phosphate: step 3/5. Functionally, catalyzes the interconversion of 2-phosphoglycerate and 3-phosphoglycerate. This chain is 2,3-bisphosphoglycerate-independent phosphoglycerate mutase, found in Aeromonas salmonicida (strain A449).